Consider the following 288-residue polypeptide: ATP phosphoribosyltransferase (288 aa).

It belongs to the ATP phosphoribosyltransferase family. Long subfamily. Mg(2+) is required as a cofactor.

The protein localises to the cytoplasm. The catalysed reaction is 1-(5-phospho-beta-D-ribosyl)-ATP + diphosphate = 5-phospho-alpha-D-ribose 1-diphosphate + ATP. It functions in the pathway amino-acid biosynthesis; L-histidine biosynthesis; L-histidine from 5-phospho-alpha-D-ribose 1-diphosphate: step 1/9. With respect to regulation, feedback inhibited by histidine. Catalyzes the condensation of ATP and 5-phosphoribose 1-diphosphate to form N'-(5'-phosphoribosyl)-ATP (PR-ATP). Has a crucial role in the pathway because the rate of histidine biosynthesis seems to be controlled primarily by regulation of HisG enzymatic activity. The protein is ATP phosphoribosyltransferase (hisG) of Methanocaldococcus jannaschii (strain ATCC 43067 / DSM 2661 / JAL-1 / JCM 10045 / NBRC 100440) (Methanococcus jannaschii).